The following is a 610-amino-acid chain: Aspartate--tRNA(Asp/Asn) ligase (610 aa).

An L-aspartate-binding site is contributed by E182. Positions Q206–K209 are aspartate. An L-aspartate-binding site is contributed by R228. Residues R228–E230 and Q237 contribute to the ATP site. H470 contributes to the L-aspartate binding site. Position 506 (E506) interacts with ATP. An L-aspartate-binding site is contributed by R513. G558–R561 contacts ATP.

The protein belongs to the class-II aminoacyl-tRNA synthetase family. Type 1 subfamily. As to quaternary structure, homodimer.

The protein localises to the cytoplasm. It catalyses the reaction tRNA(Asx) + L-aspartate + ATP = L-aspartyl-tRNA(Asx) + AMP + diphosphate. Its function is as follows. Aspartyl-tRNA synthetase with relaxed tRNA specificity since it is able to aspartylate not only its cognate tRNA(Asp) but also tRNA(Asn). Reaction proceeds in two steps: L-aspartate is first activated by ATP to form Asp-AMP and then transferred to the acceptor end of tRNA(Asp/Asn). This Acidobacterium capsulatum (strain ATCC 51196 / DSM 11244 / BCRC 80197 / JCM 7670 / NBRC 15755 / NCIMB 13165 / 161) protein is Aspartate--tRNA(Asp/Asn) ligase.